A 130-amino-acid polypeptide reads, in one-letter code: LAETNRTPFDLAEGECQVSVGFNTEYMHSSVGFALIMLSESEYASILFMSLFSVMFCLVVYSYLWSRGSYPRYRYDNLMHLCWKTSFTYIFNIPVFLLKPFSSGLKNKDPWLYNQPYSAFKTDALIGQGV.

The chain crosses the membrane as a helical span at residues Ser-45–Trp-65.

The protein belongs to the complex I subunit 1 family.

The protein resides in the mitochondrion inner membrane. It catalyses the reaction a ubiquinone + NADH + 5 H(+)(in) = a ubiquinol + NAD(+) + 4 H(+)(out). Core subunit of the mitochondrial membrane respiratory chain NADH dehydrogenase (Complex I) that is believed to belong to the minimal assembly required for catalysis. Complex I functions in the transfer of electrons from NADH to the respiratory chain. The immediate electron acceptor for the enzyme is believed to be ubiquinone. This is NADH-ubiquinone oxidoreductase chain 1 (ND1) from Artemia salina (Brine shrimp).